Consider the following 324-residue polypeptide: NADH-ubiquinone oxidoreductase chain 1 (324 aa).

The next 9 membrane-spanning stretches (helical) occupy residues 9–29 (IINP…LTLL), 43–63 (PNIV…KLFI), 75–95 (FLFL…WAPM), 106–126 (LGVL…LGSG), 146–166 (ISYE…TGGF), 177–197 (SIWL…STLA), 237–257 (ILLM…IPAF), 259–279 (ELTA…FLWV), and 299–319 (FLPL…AMAG).

This sequence belongs to the complex I subunit 1 family.

Its subcellular location is the mitochondrion inner membrane. It carries out the reaction a ubiquinone + NADH + 5 H(+)(in) = a ubiquinol + NAD(+) + 4 H(+)(out). In terms of biological role, core subunit of the mitochondrial membrane respiratory chain NADH dehydrogenase (Complex I) that is believed to belong to the minimal assembly required for catalysis. Complex I functions in the transfer of electrons from NADH to the respiratory chain. The immediate electron acceptor for the enzyme is believed to be ubiquinone. The polypeptide is NADH-ubiquinone oxidoreductase chain 1 (MT-ND1) (Salmo salar (Atlantic salmon)).